The chain runs to 180 residues: Shikimate kinase (180 aa).

14–19 (GAGKST) contacts ATP. Residue Ser18 participates in Mg(2+) binding. Positions 36, 60, and 82 each coordinate substrate. Arg120 contributes to the ATP binding site. Residue Arg139 participates in substrate binding.

Belongs to the shikimate kinase family. In terms of assembly, monomer. It depends on Mg(2+) as a cofactor.

Its subcellular location is the cytoplasm. It catalyses the reaction shikimate + ATP = 3-phosphoshikimate + ADP + H(+). It functions in the pathway metabolic intermediate biosynthesis; chorismate biosynthesis; chorismate from D-erythrose 4-phosphate and phosphoenolpyruvate: step 5/7. Catalyzes the specific phosphorylation of the 3-hydroxyl group of shikimic acid using ATP as a cosubstrate. This is Shikimate kinase from Chromohalobacter salexigens (strain ATCC BAA-138 / DSM 3043 / CIP 106854 / NCIMB 13768 / 1H11).